A 284-amino-acid chain; its full sequence is Serine/threonine-protein phosphatase Pgam5, mitochondrial (284 aa).

The helical transmembrane segment at 8-24 (LGVPTATLAVGTLLLGD) threads the bilayer.

The protein belongs to the phosphoglycerate mutase family. BPG-dependent PGAM subfamily. Interacts with skn-1 isoforms a and c.

Its subcellular location is the mitochondrion outer membrane. The catalysed reaction is O-phospho-L-seryl-[protein] + H2O = L-seryl-[protein] + phosphate. The enzyme catalyses O-phospho-L-threonyl-[protein] + H2O = L-threonyl-[protein] + phosphate. Displays phosphatase activity for serine/threonine residues. Has apparently no phosphoglycerate mutase activity. This is Serine/threonine-protein phosphatase Pgam5, mitochondrial (pgam-5) from Caenorhabditis elegans.